Here is a 1017-residue protein sequence, read N- to C-terminus: Probable calcium-transporting ATPase 8, plasma membrane-type (1017 aa).

At 1–153 (MEKLDRYLQE…FVWDAFQDMT (153 aa)) the chain is on the cytoplasmic side. 2 helical membrane passes run 154–174 (LIIL…TEGW) and 177–197 (GMYD…VTAV). The Cytoplasmic segment spans residues 198–228 (SDYKQSLQFKELDNEKKKIFIHVTRDGRRQK). Helical transmembrane passes span 229 to 249 (ISIY…DQVP) and 331 to 351 (VATV…LVLL). The Cytoplasmic segment spans residues 352-384 (VRFLIDKGMTVGLLKWYSTDALTIVNYFATAVT). The helical transmembrane segment at 385–405 (IIVVAVPEGLPLAVTLSLAFA) threads the bilayer. Asp434 (4-aspartylphosphate intermediate) is an active-site residue. Asp736 and Asp740 together coordinate Mg(2+). The chain crosses the membrane as a helical span at residues 803-823 (IVALVINFVSACITGSAPLTA). Over 824–825 (VQ) the chain is Cytoplasmic. The next 2 helical transmembrane spans lie at 826–846 (LLWV…TEPP) and 875–895 (SLYQ…LLNI). Over 896–938 (KGADSKSIINTLIFNSFVFCQVFNEINSREMQKINVFRGIISN) the chain is Cytoplasmic. The next 2 helical transmembrane spans lie at 939 to 959 (WIFI…IEFL) and 973 to 993 (WLLS…LKCI). Residues 994-1017 (PVGSGETSATPNGYRPLANGPDDI) lie on the Cytoplasmic side of the membrane.

This sequence belongs to the cation transport ATPase (P-type) (TC 3.A.3) family. Type IIB subfamily.

It localises to the membrane. It catalyses the reaction Ca(2+)(in) + ATP + H2O = Ca(2+)(out) + ADP + phosphate + H(+). Its activity is regulated as follows. Activated by calmodulin. This magnesium-dependent enzyme catalyzes the hydrolysis of ATP coupled with the translocation of calcium from the cytosol out of the cell, into the endoplasmic reticulum, or into organelles. The chain is Probable calcium-transporting ATPase 8, plasma membrane-type from Oryza sativa subsp. japonica (Rice).